A 325-amino-acid chain; its full sequence is Probable pectate lyase B (325 aa).

Positions 1–15 (MRLPTLFMLAAIATA) are cleaved as a signal peptide. Positions 132, 161, and 165 each coordinate Ca(2+). Arg-218 is a catalytic residue.

Belongs to the polysaccharide lyase 1 family. Ca(2+) is required as a cofactor.

It localises to the secreted. It carries out the reaction Eliminative cleavage of (1-&gt;4)-alpha-D-galacturonan to give oligosaccharides with 4-deoxy-alpha-D-galact-4-enuronosyl groups at their non-reducing ends.. Pectinolytic enzyme consist of four classes of enzymes: pectin lyase, polygalacturonase, pectin methylesterase and rhamnogalacturonase. Among pectinolytic enzymes, pectin lyase is the most important in depolymerization of pectin, since it cleaves internal glycosidic bonds of highly methylated pectins. Favors pectate, the anion, over pectin, the methyl ester. This Aspergillus terreus (strain NIH 2624 / FGSC A1156) protein is Probable pectate lyase B (plyB).